The chain runs to 223 residues: MNIAKMIDHTLLKPNATKSEIEKLCNEAKEYGFASVCINPCFVDLAYSMLKDTDVKVCTVIGFPLGANTIETKVFEAVEAVKKGATEVDMVLNISMLKSGDYDYVKKEIEEVVKAVKSYGDIVVKVILETCYLTVEEKVKACQLTKEAGADFVKTSTGFGPGGATVEDVKLMRQAVGENFGVKASGGVRTAEDAKAMIEAGANRIGASAGVKIVEEWNKLKMS.

The active-site Proton donor/acceptor is the Asp-89. Catalysis depends on Lys-154, which acts as the Schiff-base intermediate with acetaldehyde. The active-site Proton donor/acceptor is Lys-183.

Belongs to the DeoC/FbaB aldolase family. DeoC type 1 subfamily.

Its subcellular location is the cytoplasm. It catalyses the reaction 2-deoxy-D-ribose 5-phosphate = D-glyceraldehyde 3-phosphate + acetaldehyde. The protein operates within carbohydrate degradation; 2-deoxy-D-ribose 1-phosphate degradation; D-glyceraldehyde 3-phosphate and acetaldehyde from 2-deoxy-alpha-D-ribose 1-phosphate: step 2/2. Functionally, catalyzes a reversible aldol reaction between acetaldehyde and D-glyceraldehyde 3-phosphate to generate 2-deoxy-D-ribose 5-phosphate. The protein is Deoxyribose-phosphate aldolase of Thermoanaerobacter sp. (strain X514).